Reading from the N-terminus, the 56-residue chain is Potassium channel toxin alpha-KTx 9.1 (56 aa).

Positions 1 to 28 (MSRLFTLVLIVLAMNVMMAIISDPVVEA) are cleaved as a signal peptide. 3 cysteine pairs are disulfide-bonded: Cys-31/Cys-47, Cys-34/Cys-52, and Cys-38/Cys-54.

As to expression, expressed by the venom gland.

Its subcellular location is the secreted. Its function is as follows. Blocks small conductance calcium-activated potassium channels (KCNN, SK). Weakly inhibits the Kv7.1/KCNQ1 channel (10 uM of the toxin inhibits currents by 23.3%). Low toxicity by intracerebroventricular injection into mice. The sequence is that of Potassium channel toxin alpha-KTx 9.1 from Olivierus martensii (Manchurian scorpion).